The chain runs to 492 residues: MITLESLEMLLSIDENELLDDLVVTLMATPQLAFFFEKYPSLKSALLNDLPHWKETLKQRLRTTQVPPELEREFSCYQRSQSIDNQAFQTRLPAIMDTLNNVESPFLTQASQLITSPERTLGQKVTSGLHALFLQRWRLSLTLQTVSLHQQLMNQEREILLDELQQRLTLSGKLEPILAENENAAGRLWDLSAAQRIQTDPRLLLDFGTFLQRQPALQKLAERLGRSRETKSILTQEAPQEAFRVRVREPATVPEQVSGVHQSDDILRLMPTELVTLGISELEYEFYRRLLEHRLLTYRLQGESWREKVTERPVVHQQNEQQPRGPFIVCVDTSGSMGGFNERCAKAFCLALMRIALADNRRCYIMLFSTGVVKYELTSEDGLEQAIRFLSQSFRGGTDMAACLSALLDKMDDALWHDADAVVISDFIAQRLPDEVVNKVKSRQKQLQHRFHAVAMSDHGKPGIMHIFDHIWRFDTGLKSRLMRRWQHGKAY.

Belongs to the ViaA family. As to quaternary structure, homodimer. Interacts with RavA.

The protein resides in the cytoplasm. In terms of biological role, component of the RavA-ViaA chaperone complex, which may act on the membrane to optimize the function of some of the respiratory chains. ViaA stimulates the ATPase activity of RavA. In Pectobacterium atrosepticum (strain SCRI 1043 / ATCC BAA-672) (Erwinia carotovora subsp. atroseptica), this protein is Regulatory protein ViaA.